Reading from the N-terminus, the 136-residue chain is Small ribosomal subunit protein bS16 (136 aa).

It belongs to the bacterial ribosomal protein bS16 family.

The polypeptide is Small ribosomal subunit protein bS16 (Pseudarthrobacter chlorophenolicus (strain ATCC 700700 / DSM 12829 / CIP 107037 / JCM 12360 / KCTC 9906 / NCIMB 13794 / A6) (Arthrobacter chlorophenolicus)).